Reading from the N-terminus, the 179-residue chain is uncharacterized protein (179 aa).

Its subcellular location is the plastid. It is found in the cyanelle. This is an uncharacterized protein from Cyanophora paradoxa.